The primary structure comprises 547 residues: CTP synthase (547 aa).

Residues 1-265 (MARYVFITGG…DQAVLDAFGI (265 aa)) form an amidoligase domain region. Ser13 contributes to the CTP binding site. UTP is bound at residue Ser13. Residues 14–19 (SLGKGL) and Asp71 contribute to the ATP site. Residues Asp71 and Glu139 each contribute to the Mg(2+) site. CTP contacts are provided by residues 146 to 148 (DIE), 186 to 191 (KTKPTQ), and Lys222. Residues 186–191 (KTKPTQ) and Lys222 contribute to the UTP site. In terms of domain architecture, Glutamine amidotransferase type-1 spans 291–546 (RVAIVGKYTQ…IRAAVEVSRL (256 aa)). Gly353 contributes to the L-glutamine binding site. The Nucleophile; for glutamine hydrolysis role is filled by Cys380. L-glutamine contacts are provided by residues 381–384 (LGMQ), Glu404, and Arg474. Active-site residues include His519 and Glu521.

This sequence belongs to the CTP synthase family. As to quaternary structure, homotetramer.

It catalyses the reaction UTP + L-glutamine + ATP + H2O = CTP + L-glutamate + ADP + phosphate + 2 H(+). The catalysed reaction is L-glutamine + H2O = L-glutamate + NH4(+). The enzyme catalyses UTP + NH4(+) + ATP = CTP + ADP + phosphate + 2 H(+). It functions in the pathway pyrimidine metabolism; CTP biosynthesis via de novo pathway; CTP from UDP: step 2/2. Its activity is regulated as follows. Allosterically activated by GTP, when glutamine is the substrate; GTP has no effect on the reaction when ammonia is the substrate. The allosteric effector GTP functions by stabilizing the protein conformation that binds the tetrahedral intermediate(s) formed during glutamine hydrolysis. Inhibited by the product CTP, via allosteric rather than competitive inhibition. In terms of biological role, catalyzes the ATP-dependent amination of UTP to CTP with either L-glutamine or ammonia as the source of nitrogen. Regulates intracellular CTP levels through interactions with the four ribonucleotide triphosphates. The polypeptide is CTP synthase (Cereibacter sphaeroides (strain ATCC 17025 / ATH 2.4.3) (Rhodobacter sphaeroides)).